The sequence spans 674 residues: Xaa-Pro aminopeptidase 2 (674 aa).

Residues Met1–Gly21 form the signal peptide. 3 N-linked (GlcNAc...) asparagine glycosylation sites follow: Asn35, Asn49, and Asn65. Residue Arg116 coordinates substrate. N-linked (GlcNAc...) asparagine glycosylation is found at Asn278 and Asn291. His430 contacts substrate. Asp450, Asp461, and His524 together coordinate Zn(2+). Substrate contacts are provided by His524, His533, and Glu555. Glu555 and Glu569 together coordinate Zn(2+). A lipid anchor (GPI-anchor amidated alanine) is attached at Ala649. A propeptide spans Ala650–Val674 (removed in mature form).

It belongs to the peptidase M24B family. In terms of assembly, homotrimer. Zn(2+) is required as a cofactor. N-glycosylated. Expressed in kidney, lung, heart, placenta, liver, small intestine and colon. No expression in brain, skeletal muscle, pancreas, spleen, thymus, prostate, testis and ovary.

It localises to the cell membrane. It catalyses the reaction Release of any N-terminal amino acid, including proline, that is linked to proline, even from a dipeptide or tripeptide.. Inhibited by apstatin and the chelating agent 1,10-phenanthroline. Also inhibited by high concentrations of Zn(2+). Not significantly inhibited by bestatin or phosphoramidon. Its function is as follows. Membrane-bound metalloprotease which catalyzes the removal of a penultimate prolyl residue from the N-termini of peptides, such as Arg-Pro-Pro. May play a role in the metabolism of the vasodilator bradykinin. The polypeptide is Xaa-Pro aminopeptidase 2 (XPNPEP2) (Homo sapiens (Human)).